We begin with the raw amino-acid sequence, 101 residues long: Small ribosomal subunit protein uS14A (101 aa).

The protein belongs to the universal ribosomal protein uS14 family. As to quaternary structure, part of the 30S ribosomal subunit. Contacts proteins S3 and S10.

Its function is as follows. Binds 16S rRNA, required for the assembly of 30S particles and may also be responsible for determining the conformation of the 16S rRNA at the A site. The sequence is that of Small ribosomal subunit protein uS14A from Mycolicibacterium smegmatis (strain ATCC 700084 / mc(2)155) (Mycobacterium smegmatis).